Here is a 208-residue protein sequence, read N- to C-terminus: Protein IncB (208 aa).

In terms of biological role, this protein is thought to be cis acting and to contain the putative attachment site on the DNA for the cellular partition apparatus. This Escherichia coli protein is Protein IncB (incB).